A 122-amino-acid chain; its full sequence is Large ribosomal subunit protein uL14c (122 aa).

Belongs to the universal ribosomal protein uL14 family. In terms of assembly, part of the 50S ribosomal subunit.

The protein localises to the plastid. Its subcellular location is the chloroplast. Its function is as follows. Binds to 23S rRNA. This chain is Large ribosomal subunit protein uL14c, found in Lepidium virginicum (Virginia pepperweed).